Here is a 436-residue protein sequence, read N- to C-terminus: Serine--tRNA ligase (436 aa).

L-serine is bound at residue 241–243; that stretch reads TSE. 272–274 serves as a coordination point for ATP; sequence RAE. An L-serine-binding site is contributed by Glu-295. 359–362 serves as a coordination point for ATP; the sequence is EISS. Ser-395 is a binding site for L-serine.

Belongs to the class-II aminoacyl-tRNA synthetase family. Type-1 seryl-tRNA synthetase subfamily. Homodimer. The tRNA molecule binds across the dimer.

The protein resides in the cytoplasm. It carries out the reaction tRNA(Ser) + L-serine + ATP = L-seryl-tRNA(Ser) + AMP + diphosphate + H(+). The catalysed reaction is tRNA(Sec) + L-serine + ATP = L-seryl-tRNA(Sec) + AMP + diphosphate + H(+). It functions in the pathway aminoacyl-tRNA biosynthesis; selenocysteinyl-tRNA(Sec) biosynthesis; L-seryl-tRNA(Sec) from L-serine and tRNA(Sec): step 1/1. Functionally, catalyzes the attachment of serine to tRNA(Ser). Is also able to aminoacylate tRNA(Sec) with serine, to form the misacylated tRNA L-seryl-tRNA(Sec), which will be further converted into selenocysteinyl-tRNA(Sec). This chain is Serine--tRNA ligase, found in Beijerinckia indica subsp. indica (strain ATCC 9039 / DSM 1715 / NCIMB 8712).